Consider the following 101-residue polypeptide: Small ribosomal subunit protein uS14 (101 aa).

It belongs to the universal ribosomal protein uS14 family. In terms of assembly, part of the 30S ribosomal subunit. Contacts proteins S3 and S10.

Binds 16S rRNA, required for the assembly of 30S particles and may also be responsible for determining the conformation of the 16S rRNA at the A site. This chain is Small ribosomal subunit protein uS14, found in Orientia tsutsugamushi (strain Ikeda) (Rickettsia tsutsugamushi).